The primary structure comprises 883 residues: Phosphoenolpyruvate carboxylase (883 aa).

Residues His138 and Lys546 contribute to the active site.

The protein belongs to the PEPCase type 1 family. The cofactor is Mg(2+).

The catalysed reaction is oxaloacetate + phosphate = phosphoenolpyruvate + hydrogencarbonate. In terms of biological role, forms oxaloacetate, a four-carbon dicarboxylic acid source for the tricarboxylic acid cycle. The protein is Phosphoenolpyruvate carboxylase of Salmonella gallinarum (strain 287/91 / NCTC 13346).